The primary structure comprises 828 residues: Periplasmic nitrate reductase (828 aa).

A signal peptide (tat-type signal) is located at residues Met-1 to Ala-31. A 4Fe-4S Mo/W bis-MGD-type domain is found at Ile-39 to Asp-95. Cys-46, Cys-49, Cys-53, and Cys-81 together coordinate [4Fe-4S] cluster. Mo-bis(molybdopterin guanine dinucleotide) is bound by residues Lys-83, Gln-150, Asn-175, Cys-179, Trp-212–Met-219, Ser-243–His-247, Gln-262–Asp-264, Met-372, Gln-376, Asn-482, Ser-508–Asp-509, Lys-531, Asp-558, and Thr-718–Thr-727. Phe-794 serves as a coordination point for substrate. Asn-802 and Lys-819 together coordinate Mo-bis(molybdopterin guanine dinucleotide).

It belongs to the prokaryotic molybdopterin-containing oxidoreductase family. NasA/NapA/NarB subfamily. Component of the periplasmic nitrate reductase NapAB complex composed of NapA and NapB. The cofactor is [4Fe-4S] cluster. Requires Mo-bis(molybdopterin guanine dinucleotide) as cofactor. Post-translationally, predicted to be exported by the Tat system. The position of the signal peptide cleavage has not been experimentally proven.

It localises to the periplasm. It catalyses the reaction 2 Fe(II)-[cytochrome] + nitrate + 2 H(+) = 2 Fe(III)-[cytochrome] + nitrite + H2O. Its function is as follows. Catalytic subunit of the periplasmic nitrate reductase complex NapAB. Receives electrons from NapB and catalyzes the reduction of nitrate to nitrite. The polypeptide is Periplasmic nitrate reductase (Escherichia coli O6:K15:H31 (strain 536 / UPEC)).